The sequence spans 209 residues: MQTNRLIGINGGTFDPIHFGHLRPALEVLHALHLDEMRFIPAYQPVHRASPSVSAQQRCEMVQLAIQNQPSFKLDTIELDLGGPSYTVNTLEALKKAEPDASFVLMMGTDAFAKFNQWHDWQGVLNLANIVVTHRPGEPVPRDGEVGQIFMNHWVPNLTEASGQIVDLPVTQLDLSATALRSYLKNGDPVDYLMPENVARYIYEHQLYQ.

It belongs to the NadD family.

It catalyses the reaction nicotinate beta-D-ribonucleotide + ATP + H(+) = deamido-NAD(+) + diphosphate. It functions in the pathway cofactor biosynthesis; NAD(+) biosynthesis; deamido-NAD(+) from nicotinate D-ribonucleotide: step 1/1. Its function is as follows. Catalyzes the reversible adenylation of nicotinate mononucleotide (NaMN) to nicotinic acid adenine dinucleotide (NaAD). The chain is Probable nicotinate-nucleotide adenylyltransferase from Hydrogenovibrio crunogenus (strain DSM 25203 / XCL-2) (Thiomicrospira crunogena).